A 62-amino-acid polypeptide reads, in one-letter code: Ponericin-W-like 32.2 (62 aa).

Residues 1–23 form the signal peptide; the sequence is MKCKKQLLVIFFAYFLVVNESEA. The propeptide occupies 49 to 62; sequence RALMKRDLEDIMDP.

It belongs to the non-disulfide-bridged peptide (NDBP) superfamily. Medium-length antimicrobial peptide (group 3) family. Ponericin-W subfamily. As to expression, expressed by the venom gland.

It localises to the secreted. The protein localises to the target cell membrane. Its function is as follows. Antimicrobial peptide with potent activity against a range of Gram-positive and Gram-negative bacteria. Has high hemolytic activity against erythrocytes. May act by disrupting the integrity of the bacterial cell membrane. This Lychas mucronatus (Chinese swimming scorpion) protein is Ponericin-W-like 32.2.